Reading from the N-terminus, the 2148-residue chain is Polyketide synthase 1 (2148 aa).

The segment at 19-261 (FIFGDQSSCN…TPLAVHAPYH (243 aa)) is N-terminal acylcarrier protein transacylase domain (SAT). The region spanning 394–829 (ESKIAIIGMS…GGNTALLVED (436 aa)) is the Ketosynthase family 3 (KS3) domain. Catalysis depends on for beta-ketoacyl synthase activity residues cysteine 566, histidine 701, and histidine 745. A malonyl-CoA:ACP transacylase (MAT) domain region spans residues 930 to 1236 (FVFSGQGSQY…MRNKDGWQVL (307 aa)). Residue serine 1018 is the For acyl/malonyl transferase activity of the active site. The product template (PT) domain stretch occupies residues 1310 to 1624 (TASVHRMVHE…RKVLNTAMPP (315 aa)). Positions 1314–1447 (HRMVHESVEK…SSLHFEQPKV (134 aa)) are N-terminal hotdog fold. Positions 1314–1619 (HRMVHESVEK…FQGIPRKVLN (306 aa)) constitute a PKS/mFAS DH domain. The active-site Proton acceptor; for dehydratase activity is the histidine 1346. Residues 1474–1619 (LNSRMSSGVI…FQGIPRKVLN (146 aa)) form a C-terminal hotdog fold region. Residue aspartate 1533 is the Proton donor; for dehydratase activity of the active site. Residues 1619–1655 (NTAMPPPKSQNEAPVRSGPAKPAAKPPRSASSEHSGH) form a disordered region. A compositionally biased stretch (low complexity) spans 1634–1650 (RSGPAKPAAKPPRSASS). A Carrier 1 domain is found at 1678 to 1752 (RNPMLPVFKI…DLAAQLGLDT (75 aa)). At serine 1712 the chain carries O-(pantetheine 4'-phosphoryl)serine. Over residues 1755-1790 (SDQSSGQSSSSGGLSPRSDSIGEITSSVTTPPSLSP) the composition is skewed to low complexity. Positions 1755 to 1796 (SDQSSGQSSSSGGLSPRSDSIGEITSSVTTPPSLSPRGSVSG) are disordered. The 78-residue stretch at 1793 to 1870 (SVSGSQCKDV…SFKHMFQQGH (78 aa)) folds into the Carrier 2 domain. An O-(pantetheine 4'-phosphoryl)serine modification is found at serine 1830. The thioesterase (TE) domain stretch occupies residues 1882–2146 (LKQYRATSTL…ERVAAFIRST (265 aa)). Serine 1973 (for thioesterase activity) is an active-site residue.

It participates in pigment biosynthesis. Functionally, polyketide synthase; part of the Pks1 gene cluster that mediates the biosynthesis of an anthraquinone derivative pigment that contributes to conidial pigmentation that provides protection from UV radiation, heat and cold stress. The polyketide synthase Pks1 produces 1-acetyl-2,4,6,8-tetrahydroxy-9,10-anthraquinone though condensation of acetyl-CoA with malonyl-CoA. The dehydratase EthD and the laccase Mlac1 further convert the anthraquinone derivative into the final conidial pigment. The sequence is that of Polyketide synthase 1 from Metarhizium robertsii (strain ARSEF 23 / ATCC MYA-3075) (Metarhizium anisopliae (strain ARSEF 23)).